We begin with the raw amino-acid sequence, 59 residues long: Large ribosomal subunit protein bL32 (59 aa).

The segment at 1-59 (MAVQQNKKSPSKRGMHRAHDFLTAPVIAIEPSTGEAHRRHHISPNGFYRGRKVVKGKDE) is disordered. Positions 49-59 (RGRKVVKGKDE) are enriched in basic residues.

The protein belongs to the bacterial ribosomal protein bL32 family.

This is Large ribosomal subunit protein bL32 from Laribacter hongkongensis (strain HLHK9).